A 276-amino-acid polypeptide reads, in one-letter code: Malonyl-[acyl-carrier protein] O-methyltransferase (276 aa).

Belongs to the methyltransferase superfamily.

The enzyme catalyses malonyl-[ACP] + S-adenosyl-L-methionine = malonyl-[ACP] methyl ester + S-adenosyl-L-homocysteine. It participates in cofactor biosynthesis; biotin biosynthesis. Its function is as follows. Converts the free carboxyl group of a malonyl-thioester to its methyl ester by transfer of a methyl group from S-adenosyl-L-methionine (SAM). It allows to synthesize pimeloyl-ACP via the fatty acid synthetic pathway. This chain is Malonyl-[acyl-carrier protein] O-methyltransferase, found in Paenibacillus sp. (strain JDR-2).